The sequence spans 320 residues: Mitochondrial glutamate carrier 2 (320 aa).

3 Solcar repeats span residues 11–97 (LSIS…LRQL), 105–215 (RNLK…LNQL), and 224–313 (ASFT…GIGE). Transmembrane regions (helical) follow at residues 17–37 (LINGGIAGLVGVTCVFPIDLA), 66–86 (FLGMYRGAAVNLTLVTPEKAI), and 110–128 (EMLAGCGAGICQVVITCPM). At Ser-150 the chain carries Phosphoserine. The next 3 membrane-spanning stretches (helical) occupy residues 190–210 (GLGATLLRDIPFSIIYFPLFA), 230–250 (FVAGCTAGSVAAVAVTPLDVL), and 293–313 (ALVIAPLFGIAQGVYFIGIGE).

The protein belongs to the mitochondrial carrier (TC 2.A.29) family.

The protein localises to the mitochondrion inner membrane. It catalyses the reaction L-glutamate(in) + H(+)(in) = L-glutamate(out) + H(+)(out). Its function is as follows. Responsible for the transport of glutamate from the cytosol into the mitochondrial matrix with the concomitant import of a proton (symport system). The polypeptide is Mitochondrial glutamate carrier 2 (Slc25a18) (Mus musculus (Mouse)).